We begin with the raw amino-acid sequence, 403 residues long: Serine/threonine transporter SstT (403 aa).

The next 8 helical transmembrane spans lie at 11-31, 51-71, 81-101, 138-158, 175-195, 213-233, 285-305, and 319-339; these read GNLV…AFIS, AIAP…KEVG, VMYV…SFIF, ALAN…GIPL, AVSY…FGLV, LLGV…PILV, VAIP…VTVL, and FMTA…ASGV.

This sequence belongs to the dicarboxylate/amino acid:cation symporter (DAACS) (TC 2.A.23) family.

The protein localises to the cell inner membrane. The enzyme catalyses L-serine(in) + Na(+)(in) = L-serine(out) + Na(+)(out). It carries out the reaction L-threonine(in) + Na(+)(in) = L-threonine(out) + Na(+)(out). Its function is as follows. Involved in the import of serine and threonine into the cell, with the concomitant import of sodium (symport system). The chain is Serine/threonine transporter SstT from Haemophilus ducreyi (strain 35000HP / ATCC 700724).